A 166-amino-acid chain; its full sequence is Small ribosomal subunit protein uS5 (166 aa).

The region spanning 11–74 (LQEKLIAVNR…EKARRNMINV (64 aa)) is the S5 DRBM domain.

This sequence belongs to the universal ribosomal protein uS5 family. As to quaternary structure, part of the 30S ribosomal subunit. Contacts proteins S4 and S8.

Functionally, with S4 and S12 plays an important role in translational accuracy. Located at the back of the 30S subunit body where it stabilizes the conformation of the head with respect to the body. The chain is Small ribosomal subunit protein uS5 from Haemophilus ducreyi (strain 35000HP / ATCC 700724).